The primary structure comprises 374 residues: Inner membrane transport permease YhhJ (374 aa).

The Cytoplasmic segment spans residues 1-22 (MRHLRNIFNLGIKELRSLLGDK). Residues 23–43 (AMLTLIVFSFTVSVYSSATVT) form a helical membrane-spanning segment. Topologically, residues 44–172 (PGSLNLAPIA…TRMRFNPNLD (129 aa)) are periplasmic. The ABC transmembrane type-2 domain maps to 133 to 369 (NGYIQNIING…TIALLRFRKT (237 aa)). Residues 173 to 193 (PAWFGGVMAIINNITMLAIVL) form a helical membrane-spanning segment. Residues 194-229 (TGSALIREREHGTVEHLLVMPITPFEIMMAKIWSMG) lie on the Cytoplasmic side of the membrane. The chain crosses the membrane as a helical span at residues 230–250 (LVVLVVSGLSLVLMVKGVLGV). The Periplasmic portion of the chain corresponds to 251 to 255 (PIEGS). A helical transmembrane segment spans residues 256–276 (IPLFMLGVALSLFATTSIGIF). At 277-283 (MGTIARS) the chain is on the cytoplasmic side. Residues 284–304 (MPQLGLLVILVLLPLQMLSGG) traverse the membrane as a helical segment. Residues 305–342 (STPRESMPQMVQDIMLTMPTTHFVSLAQAILYRGAGFE) lie on the Periplasmic side of the membrane. Residues 343–363 (IVWPQFLTLMAIGGAFFTIAL) traverse the membrane as a helical segment. Topologically, residues 364–374 (LRFRKTIGTMA) are cytoplasmic.

This sequence belongs to the ABC-2 integral membrane protein family.

The protein resides in the cell inner membrane. The sequence is that of Inner membrane transport permease YhhJ (yhhJ) from Escherichia coli (strain K12).